Here is a 99-residue protein sequence, read N- to C-terminus: Integration host factor subunit alpha (99 aa).

Belongs to the bacterial histone-like protein family. In terms of assembly, heterodimer of an alpha and a beta chain.

This protein is one of the two subunits of integration host factor, a specific DNA-binding protein that functions in genetic recombination as well as in transcriptional and translational control. The chain is Integration host factor subunit alpha from Xylella fastidiosa (strain M12).